Reading from the N-terminus, the 297-residue chain is uncharacterized protein (297 aa).

The next 9 helical transmembrane spans lie at 1–21, 32–52, 72–92, 98–118, 120–140, 194–214, 218–238, 253–273, and 274–294; these read MSWI…LGII, GSIL…IYVY, AMAL…NIPS, VLFF…YGGI, LIHK…ATGI, ILIE…IFAI, VYII…LFFC, LALI…IEIP, and AYIS…ASIL.

The protein belongs to the TerC family.

It localises to the cell membrane. This is an uncharacterized protein from Rickettsia prowazekii (strain Madrid E).